Here is a 1086-residue protein sequence, read N- to C-terminus: NAD(P) transhydrogenase, mitochondrial (1086 aa).

Residues 1-43 constitute a mitochondrion transit peptide; the sequence is MANLLKTVVTGCSCPLLSNLGSCKGLRVKKDFLRTFYTHQELW. The Mitochondrial matrix portion of the chain corresponds to 44–474; it reads CKAPVKPGIP…TITPFRKTMS (431 aa). Position 70 is an N6-acetyllysine (Lys-70). The residue at position 117 (Lys-117) is an N6-succinyllysine. 182–184 contributes to the NAD(+) binding site; it reads RVT. N6-succinyllysine is present on Lys-224. Residues Val-237, 257–259, and Gly-287 contribute to the NAD(+) site; that span reads DTR. Lys-294 carries the N6-succinyllysine modification. NAD(+) contacts are provided by Glu-300 and Leu-319. At Lys-331 the chain carries N6-succinyllysine. Lys-397 carries the post-translational modification N6-acetyllysine. 4 helical membrane passes run 475-493, 501-521, 527-546, and 558-578; these read TASAYTAGLTGILGLGIAA, MVTTFGLAGIVGYHTVWGVTP, LMSVTNAISGLTAVGGLALM, and GLAALAAFISSVNIAGGFLVT. Residues 579 to 595 are Mitochondrial matrix-facing; sequence QRMLDMFKRPTDPPEYN. 5 consecutive transmembrane segments (helical) span residues 596 to 616, 622 to 642, 646 to 666, 672 to 691, and 702 to 722; these read YLYLLPAGTFVGGYLAALYSG, IMYLGSGLCCVGALAGLSTQG, LGNALGMIGVAGGLAATLGVL, LLAQMSGAMALGGTIGLTIA, and LVAAFHSLVGLAAVLTCIAEY. Topologically, residues 723–739 are cytoplasmic; sequence IIEYPHFATDAAANLTK. 5 helical membrane-spanning segments follow: residues 740–760, 778–797, 801–819, 833–853, and 857–879; these read IVAYLGTYIGGVTFSGSLIAY, HLLNAGLLAASVGGIIPFMV, FTTGITCLGSVSALSAVMG, VVITVLNSYSGWALCAEGFLL, and LLTIVGALIGSSGAILSYIMCVA. Over 880–1086 the chain is Mitochondrial matrix; it reads MNRSLANVIL…QAKVRESYQK (207 aa). NADP(+)-binding positions include Tyr-933, 965 to 970, 1007 to 1011, 1026 to 1027, 1042 to 1049, and 1068 to 1069; these read VAGRMP, GANDT, GM, KRSLGVGY, and DA. Lys-1079 is modified (N6-succinyllysine).

It in the N-terminal section; belongs to the AlaDH/PNT family. In the C-terminal section; belongs to the PNT beta subunit family. In terms of assembly, homodimer. In terms of tissue distribution, widely expressed with expression most readily detectable in adrenal, heart, kidney, thyroid and adipose tissues.

The protein localises to the mitochondrion inner membrane. It carries out the reaction NAD(+) + NADPH + H(+)(in) = NADH + NADP(+) + H(+)(out). Its function is as follows. The transhydrogenation between NADH and NADP is coupled to respiration and ATP hydrolysis and functions as a proton pump across the membrane. May play a role in reactive oxygen species (ROS) detoxification in the adrenal gland. The polypeptide is NAD(P) transhydrogenase, mitochondrial (NNT) (Homo sapiens (Human)).